A 156-amino-acid chain; its full sequence is Deoxyuridine 5'-triphosphate nucleotidohydrolase (156 aa).

Residues 74–76 (RSG), N87, 91–93 (TID), and K101 each bind substrate.

This sequence belongs to the dUTPase family. The cofactor is Mg(2+).

The enzyme catalyses dUTP + H2O = dUMP + diphosphate + H(+). Its pathway is pyrimidine metabolism; dUMP biosynthesis; dUMP from dCTP (dUTP route): step 2/2. In terms of biological role, this enzyme is involved in nucleotide metabolism: it produces dUMP, the immediate precursor of thymidine nucleotides and it decreases the intracellular concentration of dUTP so that uracil cannot be incorporated into DNA. This Wolbachia sp. subsp. Brugia malayi (strain TRS) protein is Deoxyuridine 5'-triphosphate nucleotidohydrolase.